The following is a 201-amino-acid chain: FMN-dependent NADH:quinone oxidoreductase (201 aa).

FMN is bound by residues Ser10, 16 to 18, 96 to 99, and 140 to 143; these read SQS, MYNF, and SRGG.

It belongs to the azoreductase type 1 family. In terms of assembly, homodimer. It depends on FMN as a cofactor.

It catalyses the reaction 2 a quinone + NADH + H(+) = 2 a 1,4-benzosemiquinone + NAD(+). The enzyme catalyses N,N-dimethyl-1,4-phenylenediamine + anthranilate + 2 NAD(+) = 2-(4-dimethylaminophenyl)diazenylbenzoate + 2 NADH + 2 H(+). Functionally, quinone reductase that provides resistance to thiol-specific stress caused by electrophilic quinones. Also exhibits azoreductase activity. Catalyzes the reductive cleavage of the azo bond in aromatic azo compounds to the corresponding amines. This chain is FMN-dependent NADH:quinone oxidoreductase, found in Escherichia coli O6:H1 (strain CFT073 / ATCC 700928 / UPEC).